Reading from the N-terminus, the 410-residue chain is Alanine racemase (410 aa).

Residues valine 28 to leucine 76 enclose the RPE1 insert domain. Lysine 83 (proton acceptor; specific for D-alanine) is an active-site residue. Residue lysine 83 is modified to N6-(pyridoxal phosphate)lysine. Arginine 182 contributes to the substrate binding site. The active-site Proton acceptor; specific for L-alanine is the tyrosine 305. Residue methionine 353 participates in substrate binding.

Belongs to the alanine racemase family. Pyridoxal 5'-phosphate serves as cofactor.

It catalyses the reaction L-alanine = D-alanine. It participates in amino-acid biosynthesis; D-alanine biosynthesis; D-alanine from L-alanine: step 1/1. Catalyzes the interconversion of L-alanine and D-alanine. May also act on other amino acids. In Rickettsia bellii (strain RML369-C), this protein is Alanine racemase (alr).